Consider the following 459-residue polypeptide: ATP synthase subunit beta (459 aa).

Residue 148–155 (GGAGVGKT) coordinates ATP.

Belongs to the ATPase alpha/beta chains family. As to quaternary structure, F-type ATPases have 2 components, CF(1) - the catalytic core - and CF(0) - the membrane proton channel. CF(1) has five subunits: alpha(3), beta(3), gamma(1), delta(1), epsilon(1). CF(0) has three main subunits: a(1), b(2) and c(9-12). The alpha and beta chains form an alternating ring which encloses part of the gamma chain. CF(1) is attached to CF(0) by a central stalk formed by the gamma and epsilon chains, while a peripheral stalk is formed by the delta and b chains.

The protein localises to the cell inner membrane. It carries out the reaction ATP + H2O + 4 H(+)(in) = ADP + phosphate + 5 H(+)(out). In terms of biological role, produces ATP from ADP in the presence of a proton gradient across the membrane. The catalytic sites are hosted primarily by the beta subunits. The polypeptide is ATP synthase subunit beta (Thioalkalivibrio sulfidiphilus (strain HL-EbGR7)).